The primary structure comprises 521 residues: Jacalin-related lectin 38 (521 aa).

The F-box domain maps to 2 to 48 (MQPDHDLPYDLEGEILSHLPIQILARFRCVCKRWNTLFKERRFFNSD). Kelch repeat units follow at residues 145 to 190 (KHYK…PYSV), 326 to 373 (YIYI…ITQH), and 486 to 521 (MSFV…SPLP). A Jacalin-type lectin domain is found at 377–519 (SRFAPLRGIQ…LTAFGVHFSP (143 aa)).

The protein belongs to the jacalin lectin family.

In Arabidopsis thaliana (Mouse-ear cress), this protein is Jacalin-related lectin 38 (JAL38).